The following is a 258-amino-acid chain: Granzyme K (258 aa).

Positions 1–23 (MSFSSSALVFLVAGIYMSSESFH) are cleaved as a signal peptide. The propeptide at 24–25 (TE) is activation peptide. The 228-residue stretch at 26–253 (IIGGREVQPH…YQTWIKSKLA (228 aa)) folds into the Peptidase S1 domain. A disulfide bridge connects residues C51 and C67. Catalysis depends on charge relay system residues H66 and D110. Disulfide bonds link C143/C214, C175/C193, and C204/C228. Catalysis depends on S208, which acts as the Charge relay system.

It belongs to the peptidase S1 family. Granzyme subfamily. As to expression, speen, lungs and liver non-parenchymal cells.

Its subcellular location is the cytoplasmic granule. This is Granzyme K (Gzmk) from Rattus norvegicus (Rat).